The following is a 92-amino-acid chain: Small ribosomal subunit protein uS19 (92 aa).

The tract at residues 72–92 is disordered; sequence GEFSPTRTYTGHGSDKKSKRG.

It belongs to the universal ribosomal protein uS19 family.

In terms of biological role, protein S19 forms a complex with S13 that binds strongly to the 16S ribosomal RNA. This is Small ribosomal subunit protein uS19 from Gluconobacter oxydans (strain 621H) (Gluconobacter suboxydans).